The primary structure comprises 162 residues: Photosystem II extrinsic protein V (162 aa).

The N-terminal stretch at 1–25 (MLKRCLWLVVTVLFAWQVFNGTAIA) is a signal peptide. C62, C65, H66, and H117 together coordinate heme c.

This sequence belongs to the cytochrome c family. PsbV subfamily. PSII is composed of 1 copy each of membrane proteins PsbA, PsbB, PsbC, PsbD, PsbE, PsbF, PsbH, PsbI, PsbJ, PsbK, PsbL, PsbM, PsbT, PsbX, PsbY, PsbZ, Psb30/Ycf12, peripheral proteins PsbO, CyanoQ (PsbQ), PsbU, PsbV and a large number of cofactors. It forms dimeric complexes. Heme c serves as cofactor.

Its subcellular location is the cellular thylakoid membrane. One of the extrinsic, lumenal subunits of photosystem II (PSII). PSII is a light-driven water plastoquinone oxidoreductase, using light energy to abstract electrons from H(2)O, generating a proton gradient subsequently used for ATP formation. The extrinsic proteins stabilize the structure of photosystem II oxygen-evolving complex (OEC), the ion environment of oxygen evolution and protect the OEC against heat-induced inactivation. Low-potential cytochrome c that plays a role in the OEC of PSII. This Cyanothece sp. (strain PCC 7425 / ATCC 29141) protein is Photosystem II extrinsic protein V.